The sequence spans 447 residues: Putative branched-chain amino acid carrier protein SE_1090 (447 aa).

12 helical membrane-spanning segments follow: residues threonine 5 to proline 25, isoleucine 40 to leucine 60, proline 74 to isoleucine 94, glycine 114 to leucine 134, isoleucine 143 to phenylalanine 163, glycine 193 to isoleucine 213, isoleucine 229 to isoleucine 249, leucine 290 to valine 310, isoleucine 317 to leucine 337, valine 350 to alanine 370, isoleucine 382 to isoleucine 402, and leucine 417 to valine 437.

It belongs to the branched chain amino acid transporter family.

The protein localises to the cell membrane. Its function is as follows. Component of the transport system for branched-chain amino acids (leucine, isoleucine and valine), which is coupled to a proton motive force. In Staphylococcus epidermidis (strain ATCC 12228 / FDA PCI 1200), this protein is Putative branched-chain amino acid carrier protein SE_1090.